We begin with the raw amino-acid sequence, 122 residues long: Large ribosomal subunit protein uL14 (122 aa).

Belongs to the universal ribosomal protein uL14 family. In terms of assembly, part of the 50S ribosomal subunit. Forms a cluster with proteins L3 and L19. In the 70S ribosome, L14 and L19 interact and together make contacts with the 16S rRNA in bridges B5 and B8.

In terms of biological role, binds to 23S rRNA. Forms part of two intersubunit bridges in the 70S ribosome. This Clavibacter michiganensis subsp. michiganensis (strain NCPPB 382) protein is Large ribosomal subunit protein uL14.